A 74-amino-acid chain; its full sequence is DNA-directed RNA polymerase subunit omega (74 aa).

It belongs to the RNA polymerase subunit omega family. In terms of assembly, the RNAP catalytic core consists of 2 alpha, 1 beta, 1 beta' and 1 omega subunit. When a sigma factor is associated with the core the holoenzyme is formed, which can initiate transcription.

The catalysed reaction is RNA(n) + a ribonucleoside 5'-triphosphate = RNA(n+1) + diphosphate. Promotes RNA polymerase assembly. Latches the N- and C-terminal regions of the beta' subunit thereby facilitating its interaction with the beta and alpha subunits. The sequence is that of DNA-directed RNA polymerase subunit omega from Solidesulfovibrio magneticus (strain ATCC 700980 / DSM 13731 / RS-1) (Desulfovibrio magneticus).